Reading from the N-terminus, the 154-residue chain is MAARVCCQLDPARDVLCLRPVGAESRGRPLPGPLGTLPPASPPAVPTDHGAHLSLRGLPVCAFSSAGPCALRFTSARRMETTVNAHGNLPKVLHKRTLGLSAMSTTDLEAYFKDCVFNEWEELGEEIRLKVFVLGGCRHKLVCSPAPCNFFTSA.

Positions 28 to 48 (RPLPGPLGTLPPASPPAVPTD) are disordered. Residues 68–117 (PCALRFTSARRMETTVNAHGNLPKVLHKRTLGLSAMSTTDLEAYFKDCVF) are mitochondrial targeting sequence.

Belongs to the orthohepadnavirus protein X family. In terms of assembly, may form homodimer. May interact with host CEBPA, CFLAR, CREB1, DDB1, E4F1, HBXIP, HSPD1/HSP60, NFKBIA, POLR2E and SMAD4. Interacts with host SMC5-SMC6 complex and induces its degradation. Interacts with host TRPC4AP; leading to prevent ubiquitination of TRPC4AP. Interacts with host PLSCR1; this interaction promotes ubiquitination and degradation of HBx and impairs HBx-mediated cell proliferation. Post-translationally, a fraction may be phosphorylated in insect cells and HepG2 cells, a human hepatoblastoma cell line. Phosphorylated in vitro by host protein kinase C or mitogen-activated protein kinase. N-acetylated in insect cells.

The protein localises to the host cytoplasm. It localises to the host nucleus. It is found in the host mitochondrion. Its function is as follows. Multifunctional protein that plays a role in silencing host antiviral defenses and promoting viral transcription. Does not seem to be essential for HBV infection. May be directly involved in development of cirrhosis and liver cancer (hepatocellular carcinoma). Most of cytosolic activities involve modulation of cytosolic calcium. The effect on apoptosis is controversial depending on the cell types in which the studies have been conducted. May induce apoptosis by localizing in mitochondria and causing loss of mitochondrial membrane potential. May also modulate apoptosis by binding host CFLAR, a key regulator of the death-inducing signaling complex (DISC). Promotes viral transcription by using the host E3 ubiquitin ligase DDB1 to target the SMC5-SMC6 complex to proteasomal degradation. This host complex would otherwise bind to viral episomal DNA, and prevents its transcription. Moderately stimulates transcription of many different viral and cellular transcription elements. Promoters and enhancers stimulated by HBx contain DNA binding sites for NF-kappa-B, AP-1, AP-2, c-EBP, ATF/CREB, or the calcium-activated factor NF-AT. The chain is Protein X from Hepatitis B virus genotype B2 subtype adw (isolate China/patient4/1996) (HBV-B).